The chain runs to 216 residues: Phosphatidylserine decarboxylase proenzyme (216 aa).

The active-site Schiff-base intermediate with substrate; via pyruvic acid is serine 183. Residue serine 183 is modified to Pyruvic acid (Ser); by autocatalysis.

This sequence belongs to the phosphatidylserine decarboxylase family. PSD-A subfamily. In terms of assembly, heterodimer of a large membrane-associated beta subunit and a small pyruvoyl-containing alpha subunit. Pyruvate serves as cofactor. Is synthesized initially as an inactive proenzyme. Formation of the active enzyme involves a self-maturation process in which the active site pyruvoyl group is generated from an internal serine residue via an autocatalytic post-translational modification. Two non-identical subunits are generated from the proenzyme in this reaction, and the pyruvate is formed at the N-terminus of the alpha chain, which is derived from the carboxyl end of the proenzyme. The post-translation cleavage follows an unusual pathway, termed non-hydrolytic serinolysis, in which the side chain hydroxyl group of the serine supplies its oxygen atom to form the C-terminus of the beta chain, while the remainder of the serine residue undergoes an oxidative deamination to produce ammonia and the pyruvoyl prosthetic group on the alpha chain.

The protein resides in the cell membrane. It carries out the reaction a 1,2-diacyl-sn-glycero-3-phospho-L-serine + H(+) = a 1,2-diacyl-sn-glycero-3-phosphoethanolamine + CO2. The protein operates within phospholipid metabolism; phosphatidylethanolamine biosynthesis; phosphatidylethanolamine from CDP-diacylglycerol: step 2/2. Functionally, catalyzes the formation of phosphatidylethanolamine (PtdEtn) from phosphatidylserine (PtdSer). The protein is Phosphatidylserine decarboxylase proenzyme of Chlorobaculum tepidum (strain ATCC 49652 / DSM 12025 / NBRC 103806 / TLS) (Chlorobium tepidum).